An 84-amino-acid polypeptide reads, in one-letter code: Dolichol phosphate-mannose biosynthesis regulatory protein (84 aa).

2 helical membrane passes run 11 to 31 and 49 to 69; these read FGLV…VILL and YAVL…GLFI.

It belongs to the DPM2 family. As to quaternary structure, component of the dolichol-phosphate mannose (DPM) synthase complex composed of DPM1, DPM2 and DPM3; in the complex interacts directly with DPM3. Component of the glycosylphosphatidylinositol-N-acetylglucosaminyltransferase (GPI-GnT) complex composed at least by PIGA, PIGC, PIGH, PIGP, PIGQ, PIGY and DPM2. Interacts with PIGA, PIGC and PIGQ.

Its subcellular location is the endoplasmic reticulum membrane. Its pathway is protein modification; protein glycosylation. Regulates the biosynthesis of dolichol phosphate-mannose. Regulatory subunit of the dolichol-phosphate mannose (DPM) synthase complex; essential for the ER localization and stable expression of DPM1. Part of the glycosylphosphatidylinositol-N-acetylglucosaminyltransferase (GPI-GnT) complex that catalyzes the transfer of N-acetylglucosamine from UDP-N-acetylglucosamine to phosphatidylinositol and participates in the first step of GPI biosynthesis. May act by regulating the GPI-GNT complex. The protein is Dolichol phosphate-mannose biosynthesis regulatory protein of Rattus norvegicus (Rat).